A 552-amino-acid polypeptide reads, in one-letter code: Cytochrome P450 monooxyhenase eriI (552 aa).

Residues 9-26 form a helical membrane-spanning segment; the sequence is FALKASAAVAVLLLAAWV. N-linked (GlcNAc...) asparagine glycosylation is found at Asn50 and Asn447. Cys495 is a heme binding site.

Belongs to the cytochrome P450 family. Heme serves as cofactor.

The protein localises to the membrane. It carries out the reaction (-)-cyatha-3,12-diene + reduced [NADPH--hemoprotein reductase] + O2 = erinacol + oxidized [NADPH--hemoprotein reductase] + H2O + H(+). Its pathway is secondary metabolite biosynthesis. In terms of biological role, cytochrome P450 monooxygenase; part of the gene cluster that mediates the biosynthesis of erinacines, cyathane-xylosides that show unique biological activities, including leishmanicidal activity, stimulating activity for nerve growth-factor synthesis, and agonistic activity toward the kappa opioid receptor. Within the pathway, eriI hydroxylates cyatha-3,12-diene at C-14 of the seven-membered ring to yield erinacol. The first step of the erinacines biosynthesis pathway is catalyzed by the geranylgeranyl diphosphate (GGPP) synthase eriE via conversion of farnesyl pyrophosphate and isopentyl pyrophosphate into geranylgeranyl pyrophosphate (GGPP). GGPP is then substrate of the diterpene cyclase eriG for the production of cyatha-3,12-diene. The cytochrome P450 monooxygenase eriI then hydroxylates cyatha-3,12-diene at C-14 of the seven-membered ring to produce erinacol, which is further hydroxylated at C-15 by the cytochrome P450 monooxygenase eriC to yield cyathadiol. The cytochrome P450 monooxygenase eriA then catalyzes C-11 hydroxylation in the presence of the short chain dehydrogenase/reductase (SDR) eriH, which leads to the production of cyathatriol. The acetyltransferase eriL converts cyathatriol into 11-O-acetyl-cyathatriol. The SDR eriH catalyzes further oxidation of 11-O-acetyl-cyathatriol into 1-O-acetylcyathin A3. Finally, the glycosyl transferase eriJ tranfers xylose from UDP-xylose onto C-14 of 11-O-acetyl-cyathatriol to form eracine Q. EriJ is also able to convert 11-O-acetyl-cyathatriol to eracine Q2 by using UDP-D-glucose as cosubstrate, but at a lower rate. Its function is as follows. Cytochrome P450 monooxygenase; part of the gene cluster that mediates the biosynthesis of erinacines, cyathane-xylosides that show unique biological activities, including leishmanicidal activity, stimulating activity for nerve growth-factor synthesis, and agonistic activity toward the kappa opioid receptor. The geranylgeranyl diphosphate (GGPP) synthase eriE catalyzes the first step in erinacines biosynthesis via conversion of farnesyl pyrophosphate and isopentyl pyrophosphate into geranylgeranyl pyrophosphate (GGPP). GGPP is then substrate of the diterpene cyclase eriG for the production of cyatha-3,12-diene. EriG is unable to use geranyl diphosphate (GPP) or farnesyl diphosphate (FPP) as substrates. The cytochrome P450 monooxygenase eriI then hydroxylates cyatha-3,12-diene at C-14 of the seven-membered ring to produce erinacol, which is further hydroxylated at C-15 by the cytochrome P450 monooxygenase eriC to yield cyathadiol. The cytochrome P450 monooxygenase eriA then catalyzes C-11 hydroxylation in the presence of the short chain dehydrogenase/reductase (SDR) eriH, which leads to the production of cyathatriol. The acetyltransferase eriL converts cyathatriol into 11-O-acetyl-cyathatriol. The SDR eriH catalyzes further oxidation of 11-O-acetyl-cyathatriol into 1-O-acetylcyathin A3. Finally, the glycosyl transferase eriJ tranfers xylose from UDP-xylose onto C-14 of 11-O-acetyl-cyathatriol to form eracine Q. EriJ is also able to convert 11-O-acetyl-cyathatriol to eracine Q2 by using UDP-D-glucose as cosubstrate, but at a lower rate. In the absence of eriL and eriJ, the SDR eriH is able to convert cyathatriol to cyathin A3; this is likely a switching mechanism in the biosynthesis of cyathins (C-14 ketogroup)and erinacines (C-14 glycosylated group). The roles of the SDR eriB, the polyprenyl transferase eriF and the dehydrogenase eriK have still to be identified. The chain is Cytochrome P450 monooxyhenase eriI from Hericium erinaceus (Lion's mane mushroom).